We begin with the raw amino-acid sequence, 195 residues long: Putative NADH dehydrogenase/NAD(P)H nitroreductase CC_0061 (195 aa).

It belongs to the nitroreductase family. HadB/RutE subfamily. It depends on FMN as a cofactor.

The chain is Putative NADH dehydrogenase/NAD(P)H nitroreductase CC_0061 from Caulobacter vibrioides (strain ATCC 19089 / CIP 103742 / CB 15) (Caulobacter crescentus).